The following is a 732-amino-acid chain: MTLAIVKEVPAGADGDDTTDLVVLSDAAGRMRVRADWVRGNSRRAVAVEEAVAKQDGVRVVHAYPRTGSVVVWYSPRRCDRAAVLEAIGGAKHVAAELIPARAPHSTEIRNTDVLRMVIGGAALALLGVRRYVFARPPLLGPSGRMVATGVTIFTGYPFLRGALRSLRSGKAGTDALVSAATIASLILRENVVALTVLWLLNIGEYLQDLTLRRTRRAISELLRGNQDTAWIRLTDGPEAGTEVQVPIDSVQIGDEVVVHDHVAIPVDGEVVDGEAIVNQSAITGENLPVSVVAGATVHAGSVVVRGRLVVRAQAVGNQTTIGRIITRVEEAQNDRAPIQTVGENFSRRFVPTSFIVSAITLLVTGDVRRAMTMLLIACPCAVGLSTPTAISAAIGNGARRGILIKGGSHLEQAGRVDAIVFDKTGTLTVGRPVVTNIIAMHKDWEPEQVLAYAASSEIHSRHPLAEAVIRSTEERRISIPPHEECEVLVGLGMRTWADGRTLLLGSPSLLESEQVKVSKKASEWVGKLRQQAETPLLLAVDGTLVGLISLRDEVRPEAAEVLTKLRDNGVRRIVMLTGDHPDIAKVVAEELGIDEWRAEVMPEDKLEVVRDLQDEGYVVGMVGDGINDAPALAAADIGIAMGLAGTDVAVETADVALANDDLHRLLDVRDLGGRAVDVIRQNYGMSIAVNAAGLLIGAGGALSPVLAAILHNASSVAVVANSSRLIRYRLE.

One can recognise an HMA domain in the interval 29–96 (GRMRVRADWV…AIGGAKHVAA (68 aa)). The next 6 helical transmembrane spans lie at 105–123 (HSTE…GGAA), 146–164 (MVAT…RGAL), 172–186 (AGTD…IASL), 195–209 (LTVL…YLQD), 342–366 (VGEN…LVTG), and 372–390 (MTML…TPTA). The active-site 4-aspartylphosphate intermediate is D423. Mg(2+) contacts are provided by D423, T425, and D625. Transmembrane regions (helical) follow at residues 676–695 (AVDV…AAGL) and 705–724 (PVLA…ANSS).

This sequence belongs to the cation transport ATPase (P-type) (TC 3.A.3) family. Type IB subfamily.

The protein localises to the cell membrane. The enzyme catalyses Zn(2+)(in) + ATP + H2O = Zn(2+)(out) + ADP + phosphate + H(+). Functionally, zn(2+) efflux transporter which is involved in detoxification of zinc during infection. This is Zinc-exporting P-type ATPase from Mycobacterium marinum (strain ATCC BAA-535 / M).